The following is a 194-amino-acid chain: Peptidyl-tRNA hydrolase (194 aa).

Y17 lines the tRNA pocket. Residue H22 is the Proton acceptor of the active site. 3 residues coordinate tRNA: Y68, N70, and N116.

It belongs to the PTH family. Monomer.

Its subcellular location is the cytoplasm. The enzyme catalyses an N-acyl-L-alpha-aminoacyl-tRNA + H2O = an N-acyl-L-amino acid + a tRNA + H(+). Functionally, hydrolyzes ribosome-free peptidyl-tRNAs (with 1 or more amino acids incorporated), which drop off the ribosome during protein synthesis, or as a result of ribosome stalling. In terms of biological role, catalyzes the release of premature peptidyl moieties from peptidyl-tRNA molecules trapped in stalled 50S ribosomal subunits, and thus maintains levels of free tRNAs and 50S ribosomes. The chain is Peptidyl-tRNA hydrolase from Pseudomonas savastanoi pv. phaseolicola (strain 1448A / Race 6) (Pseudomonas syringae pv. phaseolicola (strain 1448A / Race 6)).